Consider the following 430-residue polypeptide: Dye-decolorizing peroxidase Tfu_3078 (430 aa).

The segment at residues 1 to 39 is a signal peptide (tat-type signal); it reads MTEPDTERKGSSRRGFLAGLGAAALTGAGIGMAAGEVLR. A disordered region spans residues 42–75; it reads LPDSDPAASPEAEQRLRMAAQRADATAAPQPGIS. Over residues 60–69 the composition is skewed to low complexity; that stretch reads AAQRADATAA. Asp242 functions as the Proton acceptor in the catalytic mechanism. His338 provides a ligand contact to heme.

Belongs to the DyP-type peroxidase family. Monomer. It depends on heme b as a cofactor. In terms of processing, exported by the Tat system. The position of the signal peptide cleavage has not been experimentally proven.

The protein resides in the secreted. The enzyme catalyses Reactive Blue 5 + 2 H2O2 = 2,2'-disulfonyl azobenzene + 3-[(4-amino-6-chloro-1,3,5-triazin-2-yl)amino]benzenesulfonate + phthalate + 2 H2O + 2 H(+). Its function is as follows. Peroxidase that is able to convert a large number of compounds, but its physiological substrate is not known. Shows high reactivity towards anthraquinone dyes (e.g. Reactive Blue 19) and a modest activity towards standard peroxidase substrates (such as guaiacol and 2,6-dimethoxyphenol) and azo dyes (e.g. Reactive Blue 5). Is also able to oxidize aromatic sulfides enantioselectively, resulting in the corresponding (R)-sulfoxides, but with a poor efficiency. Does not display catalase activity. In Thermobifida fusca (strain YX), this protein is Dye-decolorizing peroxidase Tfu_3078.